The sequence spans 251 residues: Octanoyltransferase (251 aa).

The BPL/LPL catalytic domain occupies 49–230 (DEIADQILVL…DLDDAFAGRL (182 aa)). Residues 87-94 (RGGRITWH), 160-162 (ALG), and 173-175 (GLA) contribute to the substrate site. Cys191 (acyl-thioester intermediate) is an active-site residue.

It belongs to the LipB family.

The protein localises to the cytoplasm. It catalyses the reaction octanoyl-[ACP] + L-lysyl-[protein] = N(6)-octanoyl-L-lysyl-[protein] + holo-[ACP] + H(+). The protein operates within protein modification; protein lipoylation via endogenous pathway; protein N(6)-(lipoyl)lysine from octanoyl-[acyl-carrier-protein]: step 1/2. In terms of biological role, catalyzes the transfer of endogenously produced octanoic acid from octanoyl-acyl-carrier-protein onto the lipoyl domains of lipoate-dependent enzymes. Lipoyl-ACP can also act as a substrate although octanoyl-ACP is likely to be the physiological substrate. This is Octanoyltransferase from Corynebacterium efficiens (strain DSM 44549 / YS-314 / AJ 12310 / JCM 11189 / NBRC 100395).